The following is a 217-amino-acid chain: 3-isopropylmalate dehydratase small subunit (217 aa).

Belongs to the LeuD family. LeuD type 1 subfamily. As to quaternary structure, heterodimer of LeuC and LeuD.

It catalyses the reaction (2R,3S)-3-isopropylmalate = (2S)-2-isopropylmalate. The protein operates within amino-acid biosynthesis; L-leucine biosynthesis; L-leucine from 3-methyl-2-oxobutanoate: step 2/4. Functionally, catalyzes the isomerization between 2-isopropylmalate and 3-isopropylmalate, via the formation of 2-isopropylmaleate. In Paraburkholderia phymatum (strain DSM 17167 / CIP 108236 / LMG 21445 / STM815) (Burkholderia phymatum), this protein is 3-isopropylmalate dehydratase small subunit.